The primary structure comprises 259 residues: MLTVISPAKTLDYDTPPVTERFTLPQYLDESQALIQQLRELSPAQISELMHLSDKLAGLNAARFGSWTPDFTPANAKQALLAFKGDVYTGLDAESLSEDDFSYAQGHLRMLSGLYGLLRPLDLMQPYRLEMGTKLANARGKDLYAFWGTRISEWLNQALADQGDDVLLNLASNEYFSAVKRSALKARVINVDFKDQKNGQYKIISFYAKKARGMMSRFVIQQRISTPEQLKQFDAQGYYYSAEQSKPDHLVFLRDHPAE.

Belongs to the UPF0246 family.

In Pseudomonas putida (strain ATCC 47054 / DSM 6125 / CFBP 8728 / NCIMB 11950 / KT2440), this protein is UPF0246 protein PP_1289.